The primary structure comprises 58 residues: UPF0509 protein YciZ (58 aa).

The protein belongs to the UPF0509 family.

The protein is UPF0509 protein YciZ of Escherichia fergusonii (strain ATCC 35469 / DSM 13698 / CCUG 18766 / IAM 14443 / JCM 21226 / LMG 7866 / NBRC 102419 / NCTC 12128 / CDC 0568-73).